We begin with the raw amino-acid sequence, 418 residues long: Probable basic-leucine zipper transcription factor E (418 aa).

Positions 8–47 (IQQIQQLHMLLQQQQQQQQQQQQQQQQQQQQLQQQNFQLT) form a coiled coil. Low complexity-rich tracts occupy residues 51–71 (FQIPVNNNNNNNNNSNNNNNN) and 95–134 (INTTTTTTNNNNNNNNNNNNNNNNNNNNNNNNNNNNNNNT). 4 disordered regions span residues 51-75 (FQIPVNNNNNNNNNSNNNNNNETAF), 95-149 (INTT…KKQK), 165-196 (PTAAVKKKPPAKKSAKNAASQPTSPTLSTTNT), and 211-252 (KNQE…KNRR). The segment covering 169-179 (VKKKPPAKKSA) has biased composition (basic residues). A compositionally biased stretch (low complexity) spans 180 to 196 (KNAASQPTSPTLSTTNT). The span at 220–239 (DNSEESDSDEEDFENGDNEN) shows a compositional bias: acidic residues. Positions 246 to 309 (GDRKNRRLLK…QLMKDKVRYL (64 aa)) constitute a bZIP domain. The segment at 248-268 (RKNRRLLKNREAAQLFRQRQK) is basic motif. The tract at residues 274-281 (LESKASSL) is leucine-zipper. Residues 324–362 (SVVNQDNINNLNNNLNGLQNQQNNNNNNNNNNNNNNNNN) are a coiled coil. Residues 336–418 (NNLNGLQNQQ…DSLLFNLPPD (83 aa)) are disordered.

Belongs to the bZIP family.

Its subcellular location is the nucleus. Functionally, probable transcriptional regulator. The protein is Probable basic-leucine zipper transcription factor E (bzpE) of Dictyostelium discoideum (Social amoeba).